The primary structure comprises 705 residues: UvrABC system protein C (705 aa).

The GIY-YIG domain maps to 16–95; it reads ETPGVYRFRD…IKQFDPRFNV (80 aa). The UVR domain occupies 208–243; it reads GRYLRRLEREMQQAAQAQEYERAARLRDDIGALRRA. The span at 315-332 shows a compositional bias: low complexity; sequence AASTGTAGSTVPTTTAGS. Disordered regions lie at residues 315-335 and 683-705; these read AASTGTAGSTVPTTTAGSQGE and RADAPAPVVDPRTGEILDTETVS.

The protein belongs to the UvrC family. Interacts with UvrB in an incision complex.

It is found in the cytoplasm. The UvrABC repair system catalyzes the recognition and processing of DNA lesions. UvrC both incises the 5' and 3' sides of the lesion. The N-terminal half is responsible for the 3' incision and the C-terminal half is responsible for the 5' incision. This Frankia casuarinae (strain DSM 45818 / CECT 9043 / HFP020203 / CcI3) protein is UvrABC system protein C.